A 145-amino-acid polypeptide reads, in one-letter code: D-aminoacyl-tRNA deacylase (145 aa).

The Gly-cisPro motif, important for rejection of L-amino acids motif lies at 137-138 (GP).

This sequence belongs to the DTD family. In terms of assembly, homodimer.

Its subcellular location is the cytoplasm. It catalyses the reaction glycyl-tRNA(Ala) + H2O = tRNA(Ala) + glycine + H(+). The enzyme catalyses a D-aminoacyl-tRNA + H2O = a tRNA + a D-alpha-amino acid + H(+). An aminoacyl-tRNA editing enzyme that deacylates mischarged D-aminoacyl-tRNAs. Also deacylates mischarged glycyl-tRNA(Ala), protecting cells against glycine mischarging by AlaRS. Acts via tRNA-based rather than protein-based catalysis; rejects L-amino acids rather than detecting D-amino acids in the active site. By recycling D-aminoacyl-tRNA to D-amino acids and free tRNA molecules, this enzyme counteracts the toxicity associated with the formation of D-aminoacyl-tRNA entities in vivo and helps enforce protein L-homochirality. The chain is D-aminoacyl-tRNA deacylase from Shewanella baltica (strain OS155 / ATCC BAA-1091).